The following is a 223-amino-acid chain: Protein DEHYDRATION-INDUCED 19 homolog 3 (223 aa).

T114 bears the Phosphothreonine mark. S116 is subject to Phosphoserine.

This sequence belongs to the Di19 family. Phosphorylated in vitro by CPK3 or CPK11. As to expression, expressed in seedlings, roots, leaves, stems, flowers and siliques.

It localises to the nucleus. In Arabidopsis thaliana (Mouse-ear cress), this protein is Protein DEHYDRATION-INDUCED 19 homolog 3 (DI19-3).